Consider the following 423-residue polypeptide: Core protease OPG083 (423 aa).

Active-site residues include His241, Asp248, and Cys328.

This sequence belongs to the peptidase C57 family.

The protein localises to the virion. In terms of biological role, late protein responsible for processing most or all of the viral core and membrane proteins known to undergo morphogenesis-associated proteolysis. These proteolytic events are involved in the transformation of immature virions (IV) into mature virions (MV). Probably cleaves at least the OPG129/A3, OPG136/A10, OPG098/L4, and OPG144/A17 precursors preferentially at Ala-Gly-|-Ala motifs. Also seems to process Ala-Gly-|-Ser and Ala-Gly-|-Thr motifs. The protein is Core protease OPG083 (OPG083) of Bos taurus (Bovine).